Reading from the N-terminus, the 190-residue chain is Vascular endothelial growth factor A (190 aa).

An N-terminal signal peptide occupies residues 1-26 (MNFLLSWVHWSLALLLYLHHAKWSQA). Intrachain disulfides connect cysteine 51–cysteine 93, cysteine 82–cysteine 127, and cysteine 86–cysteine 129. An N-linked (GlcNAc...) asparagine glycan is attached at asparagine 100.

Belongs to the PDGF/VEGF growth factor family. Homodimer; disulfide-linked. Also found as heterodimer with PGF. Interacts with NRP1. Interacts with BSG. Interacts with CD82; this interaction inhibits VEGFA-mediated signaling pathway.

The protein localises to the secreted. Its function is as follows. Growth factor active in angiogenesis, vasculogenesis and endothelial cell growth. Induces endothelial cell proliferation, promotes cell migration, inhibits apoptosis and induces permeabilization of blood vessels. Binds to the FLT1/VEGFR1 and KDR/VEGFR2 receptors, heparan sulfate and heparin. Binding to NRP1 receptor initiates a signaling pathway needed for motor neuron axon guidance and cell body migration, including for the caudal migration of facial motor neurons from rhombomere 4 to rhombomere 6 during embryonic development. Also binds the DEAR/FBXW7-AS1 receptor. The chain is Vascular endothelial growth factor A (VEGFA) from Bos taurus (Bovine).